A 1216-amino-acid polypeptide reads, in one-letter code: Probable cation-transporting ATPase 13A5 (1216 aa).

5 helical membrane passes run 33 to 53, 198 to 218, 222 to 242, 401 to 421, and 433 to 453; these read RALCLVTAILTLGAVQLMFYW, LLVKQVLNPFYVFQAFTLTLW, GYIEYSVAIIILTVISIVLSV, FMVFLACVGVVGFFYALGVYM, and MALILLSATVPPVLPAALTIG. The active-site 4-aspartylphosphate intermediate is the Asp-486. Residues Asn-650 and Asn-817 are each glycosylated (N-linked (GlcNAc...) asparagine). 2 residues coordinate Mg(2+): Asp-848 and Asp-852. Transmembrane regions (helical) follow at residues 896-916, 933-950, 971-991, 1040-1060, 1075-1095, and 1113-1133; these read ALVSSFGVFKYLTMYGIIQFI, YLLQDVAITLMVSLTMSI, LLLSVFMNSCFTCIVQVCTFL, FEGTTLWPIVTFNCISAAFIF, LFSLLLASAAGLTIFILFCDF, and VSILIAAFVQFCVAFFVEDAV.

The protein belongs to the cation transport ATPase (P-type) (TC 3.A.3) family. Type V subfamily. In terms of tissue distribution, specifically expressed in brain and stomach.

The protein localises to the membrane. It catalyses the reaction ATP + H2O = ADP + phosphate + H(+). In Mus musculus (Mouse), this protein is Probable cation-transporting ATPase 13A5 (Atp13a5).